We begin with the raw amino-acid sequence, 846 residues long: DNA mismatch repair protein MutS (846 aa).

610–617 contacts ATP; the sequence is GPNMGGKS.

This sequence belongs to the DNA mismatch repair MutS family.

Its function is as follows. This protein is involved in the repair of mismatches in DNA. It is possible that it carries out the mismatch recognition step. This protein has a weak ATPase activity. This is DNA mismatch repair protein MutS from Legionella pneumophila (strain Corby).